The chain runs to 565 residues: Putative serine protease pcp-1 (565 aa).

An N-terminal signal peptide occupies residues 1 to 17; sequence MRWFLVLLLVALVSVEA. Asn-69, Asn-107, and Asn-126 each carry an N-linked (GlcNAc...) asparagine glycan. Ser-177 (charge relay system) is an active-site residue. N-linked (GlcNAc...) asparagine glycans are attached at residues Asn-240, Asn-244, Asn-257, Asn-271, Asn-319, and Asn-347. Residues Asp-451 and His-479 each act as charge relay system in the active site.

Belongs to the peptidase S28 family.

This is Putative serine protease pcp-1 (pcp-1) from Caenorhabditis elegans.